An 84-amino-acid chain; its full sequence is Insulin-like peptide 05 (84 aa).

An N-terminal signal peptide occupies residues 1 to 22 (MKTPILFVVVVAVLIVTDSAEG). A propeptide spanning residues 23–37 (FKGKANSFLKPLQRR) is cleaved from the precursor. Disulfide bonds link Cys-43/Cys-48, Cys-44/Cys-73, and Cys-57/Cys-61.

This sequence belongs to the insulin family.

It localises to the secreted. Its function is as follows. Insulin decreases blood glucose concentration. May have evolved to activate insulin receptors (INSR) in vertebrates. Molecular docking studies reveals unique interaction with the human insulin receptor. In vivo, insulin-like peptide injection reduces blood glucose levels in two models of zebrafish diabetes (streptozotocin- and glucose-induced). Also shorter swimming distance of zebrafish larvae, an effect which is not observed with human insulin. The chain is Insulin-like peptide 05 from Exaiptasia diaphana (Tropical sea anemone).